The primary structure comprises 425 residues: Neuromedin-U receptor 1 (425 aa).

Residues 1–59 (MTPPCLNCSFFPGQLSPNASTGLLSCNDSEFKEHFDLEDLNLTHEDLRLKYLGPQQVKQ) lie on the Extracellular side of the membrane. A glycan (N-linked (GlcNAc...) asparagine) is linked at N41. The chain crosses the membrane as a helical span at residues 60–80 (FLPICVTYLLIFVVGTLGNGL). Over 81 to 96 (TCTVILRQKAMHTPTN) the chain is Cytoplasmic. The helical transmembrane segment at 97-117 (FYLFSLAVSDLLVLLVGLPLE) threads the bilayer. Over 118-137 (LYEMQHNYPFQLGAGGCYFR) the chain is Extracellular. An intrachain disulfide couples C134 to C219. Residues 138-158 (ILLLETVCLASVLNVTALSVE) form a helical membrane-spanning segment. Over 159–181 (RYVAVVHPLQAKSVMTRTHVRRM) the chain is Cytoplasmic. A helical membrane pass occupies residues 182 to 202 (LGAIWVFAILFSLPNTSLHGL). The Extracellular portion of the chain corresponds to 203 to 235 (SPLYVPCRGPVPDSVTCTLVRPQFFYKLVIQTT). The chain crosses the membrane as a helical span at residues 236–256 (ILLFFCLPMVTISVLYLLIGL). The Cytoplasmic segment spans residues 257–294 (RLRRERILLQEEVKGRISAAARQASHRSIQLRDRERRQ). A helical membrane pass occupies residues 295 to 315 (VTKMLIALVIVFGTCWVPFHA). Residues 316–331 (DRLMWSMVSHWTDGLR) lie on the Extracellular side of the membrane. The chain crosses the membrane as a helical span at residues 332 to 352 (LAFQSVHLASGVFLYLGSAAN). The Cytoplasmic portion of the chain corresponds to 353–425 (PVLYNLMSTR…GCEQETDPPE (73 aa)). Residues 406–425 (DVPLAENRDPGCEQETDPPE) are disordered.

It belongs to the G-protein coupled receptor 1 family. As to expression, highly expressed in the small intestine and lung. Low expression in the central nervous system.

The protein resides in the cell membrane. Functionally, receptor for the neuromedin-U and neuromedin-S neuropeptides. The sequence is that of Neuromedin-U receptor 1 (Nmur1) from Rattus norvegicus (Rat).